Here is a 171-residue protein sequence, read N- to C-terminus: NADH-quinone oxidoreductase subunit I 1 (171 aa).

4Fe-4S ferredoxin-type domains lie at 39 to 71 (IVLT…LTKA) and 81 to 110 (EHFR…LTPD). [4Fe-4S] cluster-binding residues include Cys51, Cys54, Cys57, Cys61, Cys90, Cys93, Cys96, and Cys100.

It belongs to the complex I 23 kDa subunit family. NDH-1 is composed of 14 different subunits. Subunits NuoA, H, J, K, L, M, N constitute the membrane sector of the complex. It depends on [4Fe-4S] cluster as a cofactor.

It is found in the cell inner membrane. It carries out the reaction a quinone + NADH + 5 H(+)(in) = a quinol + NAD(+) + 4 H(+)(out). Functionally, NDH-1 shuttles electrons from NADH, via FMN and iron-sulfur (Fe-S) centers, to quinones in the respiratory chain. The immediate electron acceptor for the enzyme in this species is believed to be ubiquinone. Couples the redox reaction to proton translocation (for every two electrons transferred, four hydrogen ions are translocated across the cytoplasmic membrane), and thus conserves the redox energy in a proton gradient. This chain is NADH-quinone oxidoreductase subunit I 1, found in Rhodopseudomonas palustris (strain BisB5).